Consider the following 838-residue polypeptide: U1 SNP1-associating protein 1 (838 aa).

Residues 1-536 (MSEYLAQTPC…VRPLRNSFPL (536 aa)) lie on the Cytoplasmic side of the membrane. The tract at residues 31–240 (HPLSTVGRLL…DFAPAHNSFF (210 aa)) is required for ERAD-L function. Positions 259–318 (ERFVLEFISDATLSITQMNVKPDTTVKQVKDFICSVYTHSLNLRRNDIKLIYKGQLLHEN) constitute a Ubiquitin-like domain. The interval 319 to 418 (NFAGNSSKIS…VPTDELYRKC (100 aa)) is important for HRD1 oligomer formation. Residues 345-535 (QEYTESGPGF…VVRPLRNSFP (191 aa)) form an interaction with HRD1 region. 3 positions are modified to phosphoserine: serine 374, serine 376, and serine 379. The tract at residues 437-490 (SSYLSVIKGDYGEIKIPISSNDYRINGDNILLSPSAIEQLESALNFKIERPRDS) is required for ERAD-L function and HRD1 oligomer formation. Residues 537–559 (LLVLIRTFYLIGYNSLVPFFIIL) form a helical membrane-spanning segment. Topologically, residues 560–563 (EFGS) are extracellular. Residues 564-583 (FLPWKYIILLSLLFIFRTVW) traverse the membrane as a helical segment. Topologically, residues 584–838 (NTQEVWNLWR…QPHLYIPDED (255 aa)) are cytoplasmic. The interval 584–838 (NTQEVWNLWR…QPHLYIPDED (255 aa)) is interaction with DER1. The segment at 795–838 (ARDREQPAPSAQQQENEDEALIIPDEEEPTATGAQPHLYIPDED) is disordered. Positions 809–823 (ENEDEALIIPDEEEP) are enriched in acidic residues.

As to quaternary structure, component of the HRD1 ubiquitin ligase complex which contains the E3 ligase HRD1, its cofactors HRD3, USA1 and DER1, substrate recruiting factor YOS9 and CDC48-binding protein UBX2. Within the complex, interacts directly with HRD1 (via N-terminus) and DER1 (via C-terminus) and indirectly with HRD3. In ERAD-L, HRD3 and YOS9 jointly bind misfolded glycoproteins in the endoplasmic reticulum (ER) lumen. Movement of ERAD-L substrates through the ER membrane is facilitated by HRD1 and DER1 which have lateral gates facing each other and which distort the membrane region between the lateral gates, making it much thinner than a normal phospholipid bilayer. Substrates insert into the membrane as a hairpin loop with one strand interacting with DER1 and the other with HRD1. The HRD1 complex interacts with the heterotrimeric CDC48-NPL4-UFD1 ATPase complex which is recruited by UBX2 via its interaction with CDC48 and which moves ubiquitinated substrates to the cytosol for targeting to the proteasome.

It is found in the endoplasmic reticulum membrane. Scaffold protein of the endoplasmic reticulum-associated degradation (ERAD) (also known as endoplasmic reticulum quality control, ERQC) pathway involved in ubiquitin-dependent degradation of misfolded endoplasmic reticulum proteins. Component of the HRD1 ubiquitin ligase complex, which is part of the ERAD-L and ERAD-M pathways responsible for the rapid degradation of soluble lumenal and membrane proteins with misfolded lumenal domains (ERAD-L), or ER-membrane proteins with misfolded transmembrane domains (ERAD-M). Has multiple functions in ERAD including recruitment of DER1 to the HRD1 ubiquitin ligase, and regulation of HRD1 activity. Involved in oligomerization of HRD1 and in HRD1 autoubiquitination and degradation. The chain is U1 SNP1-associating protein 1 (USA1) from Saccharomyces cerevisiae (strain ATCC 204508 / S288c) (Baker's yeast).